Consider the following 474-residue polypeptide: Alanine/serine racemase (474 aa).

Pyridoxal 5'-phosphate is bound by residues 139 to 140 and Gln-282; that span reads GS. Lys-308 is modified (N6-(pyridoxal phosphate)lysine). Residue Thr-336 coordinates pyridoxal 5'-phosphate.

Belongs to the class-III pyridoxal-phosphate-dependent aminotransferase family. In terms of assembly, homohexamer. It depends on pyridoxal 5'-phosphate as a cofactor.

It catalyses the reaction L-alanine = D-alanine. The catalysed reaction is L-serine = D-serine. Its activity is regulated as follows. Completely inhibited by hydroxylamine hydrochloride. Catalyzes the interconversion of L-alanine and D-alanine, and L-serine and D-serine. Has weak activity with valine and threonine. This is Alanine/serine racemase from Pyrococcus horikoshii (strain ATCC 700860 / DSM 12428 / JCM 9974 / NBRC 100139 / OT-3).